Here is a 238-residue protein sequence, read N- to C-terminus: Cadherin-2 (238 aa).

Cadherin domains are found at residues 1–46, 47–161, and 162–238; these read TKPL…RPEF, LHQV…PPEF, and TAMT…RMFV. Residues 1–238 are Extracellular-facing; it reads TKPLDRELIA…IDFETNRMFV (238 aa). Asp5, Glu7, Asp38, Met39, Asn40, Asp41, and Asn42 together coordinate Ca(2+). The N-linked (GlcNAc...) asparagine glycan is linked to Asn52. 3 residues coordinate Ca(2+): Asp72, Asp74, and Asn80. Asn104 carries an N-linked (GlcNAc...) asparagine glycan. Asp132 contributes to the Ca(2+) binding site. N-linked (GlcNAc...) asparagine glycosylation is present at Asn181.

Homodimer (via extracellular region). Can also form heterodimers with other cadherins (via extracellular region). Dimerization occurs in trans, i.e. with a cadherin chain from another cell. Interacts with CDCP1. Interacts with PCDH8; this complex may also include TAOK2. The interaction with PCDH8 may lead to internalization through TAOK2/p38 MAPK pathway. Identified in a complex containing FGFR4, NCAM1, CDH2, PLCG1, FRS2, SRC, SHC1, GAP43 and CTTN. May interact with OBSCN (via protein kinase domain 2). Cleaved by MMP24. Ectodomain cleavage leads to the generation of a soluble 90 kDa N-terminal soluble fragment and a 45 kDa membrane-bound C-terminal fragment 1 (CTF1), which is further cleaved by gamma-secretase into a 35 kDa. Cleavage in neural stem cells by MMP24 affects CDH2-mediated anchorage of neural stem cells to ependymocytes in the adult subependymal zone, leading to modulate neural stem cell quiescence. Post-translationally, may be phosphorylated by OBSCN.

Its subcellular location is the cell membrane. It localises to the sarcolemma. It is found in the cell junction. The protein localises to the cell surface. The protein resides in the desmosome. Its subcellular location is the adherens junction. In terms of biological role, calcium-dependent cell adhesion protein; preferentially mediates homotypic cell-cell adhesion by dimerization with a CDH2 chain from another cell. Cadherins may thus contribute to the sorting of heterogeneous cell types. Acts as a regulator of neural stem cells quiescence by mediating anchorage of neural stem cells to ependymocytes in the adult subependymal zone: upon cleavage by MMP24, CDH2-mediated anchorage is affected, leading to modulate neural stem cell quiescence. Plays a role in cell-to-cell junction formation between pancreatic beta cells and neural crest stem (NCS) cells, promoting the formation of processes by NCS cells. Required for proper neurite branching. Required for pre- and postsynaptic organization. CDH2 may be involved in neuronal recognition mechanism. In hippocampal neurons, may regulate dendritic spine density. The sequence is that of Cadherin-2 (CDH2) from Cricetulus griseus (Chinese hamster).